A 202-amino-acid polypeptide reads, in one-letter code: Matrix protein (202 aa).

The interval 1-33 (MNILRKIVKNRKDEDTQKPSPASAPPDDDDLWL) is disordered. The short motif at 35-38 (PPEY) is the PPXY motif element. The interval 115-151 (KLRRTLIFQWADSRGPLEGEELEHSQEITWDDDTEFV) is essential for glycoprotein binding.

Belongs to the lyssavirus matrix protein family. As to quaternary structure, homomultimer. Interacts with nucleoprotein and with the cytoplasmic domain of glycoprotein. Interacts with host ATP6V1A; this interaction plays an important role in virion uncoating after viral entry.

The protein resides in the virion membrane. It is found in the host endomembrane system. The protein localises to the host cytoplasm. Plays a major role in assembly, budding and uncoating of virion after membrane fusion. Completely covers the ribonucleoprotein coil and keep it in condensed bullet-shaped form. Inhibits viral transcription and stimulates replication. Plays a major role in early induction of TRAIL-mediated apoptosis in infected neurons. Inhibits the integrated stress response (ISR) in the infected cell by blocking the formation of stress granules. The polypeptide is Matrix protein (M) (Homo sapiens (Human)).